The primary structure comprises 293 residues: Elongation factor Ts (293 aa).

Residues 81-84 (TDFV) are involved in Mg(2+) ion dislocation from EF-Tu.

It belongs to the EF-Ts family.

The protein localises to the cytoplasm. Functionally, associates with the EF-Tu.GDP complex and induces the exchange of GDP to GTP. It remains bound to the aminoacyl-tRNA.EF-Tu.GTP complex up to the GTP hydrolysis stage on the ribosome. This Thioalkalivibrio sulfidiphilus (strain HL-EbGR7) protein is Elongation factor Ts.